Here is a 279-residue protein sequence, read N- to C-terminus: GTP cyclohydrolase MptA (279 aa).

This sequence belongs to the GTP cyclohydrolase IV family. Homodimer. It depends on Fe(2+) as a cofactor.

The catalysed reaction is GTP + H2O = 7,8-dihydroneopterin 2',3'-cyclic phosphate + formate + diphosphate + H(+). It participates in cofactor biosynthesis; 5,6,7,8-tetrahydromethanopterin biosynthesis. Converts GTP to 7,8-dihydro-D-neopterin 2',3'-cyclic phosphate, the first intermediate in the biosynthesis of coenzyme methanopterin. The protein is GTP cyclohydrolase MptA of Korarchaeum cryptofilum (strain OPF8).